The primary structure comprises 918 residues: Calcium-transporting ATPase type 2C member 1 (918 aa).

Topologically, residues 1-78 (MKVARFQKIP…EPLWKKYISQ (78 aa)) are cytoplasmic. The helical transmembrane segment at 79–95 (FKNPLIMLLLASAVISI) threads the bilayer. Residues 96–99 (LMRQ) are Extracellular-facing. The chain crosses the membrane as a helical span at residues 100-121 (FDDAVSITVAIVIVVTVAFVQE). At 122–262 (YRSEKSLEEL…PKTPLQKSMD (141 aa)) the chain is on the cytoplasmic side. Residues 263-282 (LLGKQLSFYSFGIIGIIMLV) traverse the membrane as a helical segment. Residues 283-294 (GWLLGKDILEMF) are Extracellular-facing. Residues 295–316 (TISVSLAVAAIPEGLPIVVTVT) form a helical membrane-spanning segment. The Cytoplasmic portion of the chain corresponds to 317–699 (LALGVMRMVK…EGKGIYNNIK (383 aa)). Asp-349 functions as the 4-aspartylphosphate intermediate in the catalytic mechanism. Residues Asp-643 and Asp-647 each coordinate Mg(2+). The chain crosses the membrane as a helical span at residues 700–722 (NFVRFQLSTSIAALTLISLATLM). Topologically, residues 723-727 (NFPNP) are extracellular. Residues 728–751 (LNAMQILWINIIMDGPPAQSLGVE) form a helical membrane-spanning segment. The Cytoplasmic portion of the chain corresponds to 752–775 (PVDKDVIRKPPRNWKDSILTKNLI). Residues 776-794 (LKILVSSIIIVCGTLFVFW) traverse the membrane as a helical segment. The Extracellular portion of the chain corresponds to 795–801 (RELRDNV). Residues 802–827 (ITPRDTTMTFTCFVFFDMFNALSSRS) traverse the membrane as a helical segment. Residues 828 to 842 (QTKSVFEIGLCSNKM) are Cytoplasmic-facing. Residues 843–862 (FCYAVLGSIMGQLLVIYFPP) form a helical membrane-spanning segment. Residues 863–875 (LQKVFQTESLSIL) are Extracellular-facing. A helical transmembrane segment spans residues 876–892 (DLLFLLGLTSSVCIVSE). At 893-918 (IIKKVERSREKVQKNAGSASSSFLEV) the chain is on the cytoplasmic side.

The protein belongs to the cation transport ATPase (P-type) (TC 3.A.3) family. Type IIA subfamily. As to quaternary structure, monomer. Homodimer. As to expression, expressed in hippocampal neurons in the CA3 region of the Amon's horn (at protein level). Expressed in brain, heart, lung, stomach, liver, colon and mammary gland.

It is found in the golgi apparatus. Its subcellular location is the trans-Golgi network membrane. The protein resides in the golgi stack membrane. It catalyses the reaction Ca(2+)(in) + ATP + H2O = Ca(2+)(out) + ADP + phosphate + H(+). It carries out the reaction Mn(2+)(in) + ATP + H2O = Mn(2+)(out) + ADP + phosphate + H(+). In terms of biological role, ATP-driven pump that supplies the Golgi apparatus with Ca(2+) and Mn(2+) ions, both essential cofactors for processing and trafficking of newly synthesized proteins in the secretory pathway. Within a catalytic cycle, acquires Ca(2+) or Mn(2+) ions on the cytoplasmic side of the membrane and delivers them to the lumenal side. The transfer of ions across the membrane is coupled to ATP hydrolysis and is associated with a transient phosphorylation that shifts the pump conformation from inward-facing to outward-facing state. Plays a primary role in the maintenance of Ca(2+) homeostasis in the trans-Golgi compartment with a functional impact on Golgi and post-Golgi protein sorting as well as a structural impact on cisternae morphology. Responsible for loading the Golgi stores with Ca(2+) ions in keratinocytes, contributing to keratinocyte differentiation and epidermis integrity. Participates in Ca(2+) and Mn(2+) ions uptake into the Golgi store of hippocampal neurons and regulates protein trafficking required for neural polarity. May also play a role in the maintenance of Ca(2+) and Mn(2+) homeostasis and signaling in the cytosol while preventing cytotoxicity. The polypeptide is Calcium-transporting ATPase type 2C member 1 (Mus musculus (Mouse)).